Consider the following 70-residue polypeptide: Translational regulator CsrA (70 aa).

This sequence belongs to the CsrA/RsmA family. In terms of assembly, homodimer; the beta-strands of each monomer intercalate to form a hydrophobic core, while the alpha-helices form wings that extend away from the core.

It is found in the cytoplasm. A key translational regulator that binds mRNA to regulate translation initiation and/or mRNA stability. Mediates global changes in gene expression, shifting from rapid growth to stress survival by linking envelope stress, the stringent response and the catabolite repression systems. Usually binds in the 5'-UTR; binding at or near the Shine-Dalgarno sequence prevents ribosome-binding, repressing translation, binding elsewhere in the 5'-UTR can activate translation and/or stabilize the mRNA. Its function is antagonized by small RNA(s). In Hydrogenovibrio crunogenus (strain DSM 25203 / XCL-2) (Thiomicrospira crunogena), this protein is Translational regulator CsrA.